The chain runs to 581 residues: ATP-dependent lipid A-core flippase (581 aa).

A run of 5 helical transmembrane segments spans residues 15–35, 62–82, 152–172, 252–272, and 274–294; these read LWPIISPFKSGLIISIVALII, ISIWMPLAIVALMLSRGSSGF, IIGLFFMMFFHSWKLSSVLII, IIIQFISSITLAVILYISSLP, and IIDELTAGTITVIFTSMIALM. In terms of domain architecture, ABC transmembrane type-1 spans 27–309; sequence IISIVALIIN…LTNVNANFQK (283 aa). An ABC transporter domain is found at 341-577; the sequence is IKFKNITFTY…KGVYAQIYRL (237 aa). 375 to 382 contributes to the ATP binding site; the sequence is GSSGAGKS.

It belongs to the ABC transporter superfamily. Lipid exporter (TC 3.A.1.106) family. As to quaternary structure, homodimer.

It localises to the cell membrane. It catalyses the reaction ATP + H2O + lipid A-core oligosaccharideSide 1 = ADP + phosphate + lipid A-core oligosaccharideSide 2.. Its function is as follows. Involved in lipopolysaccharide (LPS) biosynthesis. Translocates lipid A-core from the inner to the outer leaflet of the inner membrane. Transmembrane domains (TMD) form a pore in the inner membrane and the ATP-binding domain (NBD) is responsible for energy generation. This Wigglesworthia glossinidia brevipalpis protein is ATP-dependent lipid A-core flippase.